We begin with the raw amino-acid sequence, 158 residues long: Male-specific protein scotti (158 aa).

The segment at 24 to 43 (NVPDGNGDGDGDGDGDGNDA) is disordered. Residues 30-42 (GDGDGDGDGDGND) are compositionally biased toward acidic residues.

The protein belongs to the male-specific scotti family.

Its function is as follows. Post-meiotically transcribed gene that has a role in late spermiogenesis; required for actin cone progression during spermatid individualization. This is Male-specific protein scotti from Drosophila virilis (Fruit fly).